The chain runs to 470 residues: 6-phospho-beta-galactosidase (470 aa).

D-galactose 6-phosphate-binding residues include Q19, H116, N159, E160, and N297. E160 serves as the catalytic Proton donor. The active-site Nucleophile is the E375. D-galactose 6-phosphate-binding residues include S430, W431, K437, and Y439.

The protein belongs to the glycosyl hydrolase 1 family.

The enzyme catalyses a 6-phospho-beta-D-galactoside + H2O = D-galactose 6-phosphate + an alcohol. It participates in carbohydrate metabolism; lactose degradation; D-galactose 6-phosphate and beta-D-glucose from lactose 6-phosphate: step 1/1. The protein is 6-phospho-beta-galactosidase of Staphylococcus aureus (strain MRSA252).